Reading from the N-terminus, the 323-residue chain is Protein translocase subunit SecF (323 aa).

The next 6 helical transmembrane spans lie at 19–39 (GVIV…FKGF), 138–158 (ILSL…RYEW), 162–182 (LASV…VIVF), 189–209 (EVIA…IIIF), 244–264 (LTVF…IIGF), and 269–289 (LIGT…VALL).

This sequence belongs to the SecD/SecF family. SecF subfamily. In terms of assembly, forms a complex with SecD. Part of the essential Sec protein translocation apparatus which comprises SecA, SecYEG and auxiliary proteins SecDF-YajC and YidC.

Its subcellular location is the cell inner membrane. In terms of biological role, part of the Sec protein translocase complex. Interacts with the SecYEG preprotein conducting channel. SecDF uses the proton motive force (PMF) to complete protein translocation after the ATP-dependent function of SecA. This chain is Protein translocase subunit SecF, found in Helicobacter pylori (strain ATCC 700392 / 26695) (Campylobacter pylori).